The sequence spans 360 residues: Isopentenyl-diphosphate delta-isomerase (360 aa).

6-7 (RK) provides a ligand contact to substrate. FMN-binding positions include T62, 63–65 (GMT), S93, and N122. A substrate-binding site is contributed by 93–95 (SQR). Q157 lines the substrate pocket. E158 contributes to the Mg(2+) binding site. FMN is bound by residues K189, S214, T219, 272-274 (GIR), and 293-294 (AL).

The protein belongs to the IPP isomerase type 2 family. In terms of assembly, homooctamer. Dimer of tetramers. The cofactor is FMN. NADPH serves as cofactor. Mg(2+) is required as a cofactor.

The protein resides in the cytoplasm. The catalysed reaction is isopentenyl diphosphate = dimethylallyl diphosphate. Involved in the biosynthesis of isoprenoids. Catalyzes the 1,3-allylic rearrangement of the homoallylic substrate isopentenyl (IPP) to its allylic isomer, dimethylallyl diphosphate (DMAPP). This Ignicoccus hospitalis (strain KIN4/I / DSM 18386 / JCM 14125) protein is Isopentenyl-diphosphate delta-isomerase.